We begin with the raw amino-acid sequence, 263 residues long: Mannose-specific lectin 2 (263 aa).

A signal peptide spans 1-24; it reads MAKSLVLSSLLLALLLAAPLASLA. 2 Bulb-type lectin domains span residues 26–136 and 150–260; these read NNVL…APNR and RNVL…SSAS. Cystine bridges form between Cys54-Cys76 and Cys178-Cys203.

Heterotetramer of 2 domain 1 and 2 domain 2 chains arranged as a dimer of domain 1/domain 2 heterodimers.

Its function is as follows. Mannose-specific lectin. Has weak agglutinating activity towards trypsin-treated erythrocytes from rabbit but not from human. This chain is Mannose-specific lectin 2, found in Crocus vernus (Dutch crocus).